A 539-amino-acid chain; its full sequence is Nucleoporin NUP60 (539 aa).

Phosphoserine occurs at positions 10, 49, 81, and 89. A disordered region spans residues 44–80 (DSARVSPRNNVANKQPRNESFNRRISSMPGGYFHSEI). Positions 91 to 118 (VVSAVGEARNDIENKEEEYDETHETNIS) form a coiled coil. Ser-162, Ser-171, Ser-214, and Ser-222 each carry phosphoserine. Composition is skewed to polar residues over residues 242–252 (TANTSAQSIAS) and 258–267 (SGVSKSAPSK). Disordered stretches follow at residues 242–267 (TANT…APSK), 305–329 (IRKH…TTVK), and 347–493 (NATK…GKHI). The segment covering 347–359 (NATKISPSAPSKD) has biased composition (polar residues). Phosphoserine is present on residues Ser-352, Ser-360, Ser-374, and Ser-382. Composition is skewed to polar residues over residues 395 to 433 (SAFN…TNLQ) and 448 to 485 (GDST…LSQE). FXF repeat units follow at residues 399 to 401 (FSF) and 427 to 429 (FNF). At Thr-460 the chain carries Phosphothreonine. The stretch at 469 to 471 (FVF) is one FXF 3 repeat. Ser-480 and Ser-483 each carry phosphoserine. The stretch at 509 to 511 (FDF) is one FXF 4 repeat.

As to quaternary structure, component of the nuclear pore complex (NPC). NPC constitutes the exclusive means of nucleocytoplasmic transport. NPCs allow the passive diffusion of ions and small molecules and the active, nuclear transport receptor-mediated bidirectional transport of macromolecules such as proteins, RNAs, ribonucleoparticles (RNPs), and ribosomal subunits across the nuclear envelope. Due to its 8-fold rotational symmetry, all subunits are present with 8 copies or multiples thereof. Binds to NUP1 and NUP2 forming the nuclear basket and the distal ring. The interaction with NUP2 is GSP1-GTP-dependent. Interacts through its FG repeats with karyopherins, such as KAP123 and KAP95-SRP1 (KAP60). Also interacts with GSP1-GTP and SRM1 (PRP20), where NUP60 reduces SRM1 activity, thus inhibiting GSP1 guanine nucleotide dissociation. Post-translationally, phosphorylated by CDC28.

The protein resides in the nucleus. Its subcellular location is the nuclear pore complex. It localises to the nucleus membrane. In terms of biological role, functions as a component of the nuclear pore complex (NPC). NPC components, collectively referred to as nucleoporins (NUPs), can play the role of both NPC structural components and of docking or interaction partners for transiently associated nuclear transport factors. Active directional transport is assured by both, a Phe-Gly (FG) repeat affinity gradient for these transport factors across the NPC and a transport cofactor concentration gradient across the nuclear envelope (GSP1 and GSP2 GTPases associated predominantly with GTP in the nucleus, with GDP in the cytoplasm). This is Nucleoporin NUP60 (NUP60) from Saccharomyces cerevisiae (strain ATCC 204508 / S288c) (Baker's yeast).